The primary structure comprises 386 residues: Patatin-2-Kuras 3 (386 aa).

The N-terminal stretch at 1-23 is a signal peptide; the sequence is MATTKSVLVLFFMILATTSSTCA. One can recognise a PNPLA domain in the interval 32–229; the sequence is LSIDGGGIKG…TVGDPALLSL (198 aa). The GXGXXG motif lies at 36–41; the sequence is GGGIKG. The short motif at 75–79 is the GXSXG element; it reads GTSTG. The Nucleophile role is filled by S77. A glycan (N-linked (GlcNAc...) asparagine) is linked at N115. Residue D215 is the Proton acceptor of the active site. Positions 215 to 217 match the DGA/G motif; the sequence is DGA. A coiled-coil region spans residues 321–384; it reads ENALTGTTTE…DRKKLRANKA (64 aa).

The protein belongs to the patatin family. In terms of tissue distribution, tuber.

The protein localises to the vacuole. Functionally, probable lipolytic acyl hydrolase (LAH), an activity which is thought to be involved in the response of tubers to pathogens. The sequence is that of Patatin-2-Kuras 3 (pat2-k3) from Solanum tuberosum (Potato).